The following is a 567-amino-acid chain: Thiol:disulfide interchange protein DsbD (567 aa).

The first 19 residues, 1 to 19 (MAQRIFTLILLLCSTSAFA), serve as a signal peptide directing secretion. 2 disulfides stabilise this stretch: Cys122/Cys128 and Cys185/Cys307. 8 helical membrane-spanning segments follow: residues 166–186 (LPFSALWALLIGIGIAFTPCV), 210–230 (LLLAFIYVQGMALTYTALGLV), 246–266 (YVLIGLAIVFTLLALSMFGLF), 299–319 (IAGLICSPCTTAPLSAILLYI), 326–346 (WLGGGTLYLYALGMGLPLMLV), 360–380 (WMAHVKTAFGFVILALPVFLL), 387–407 (AWGLRLWSLLGVAFFGWAFIT), and 418–438 (IVQIILLAAALISVRPLQDWA). The 133-residue stretch at 435–567 (QDWAFGSPSA…FSAHLHDRQP (133 aa)) folds into the Thioredoxin domain. Cys482 and Cys485 are joined by a disulfide.

Belongs to the thioredoxin family. DsbD subfamily.

It localises to the cell inner membrane. The enzyme catalyses [protein]-dithiol + NAD(+) = [protein]-disulfide + NADH + H(+). It catalyses the reaction [protein]-dithiol + NADP(+) = [protein]-disulfide + NADPH + H(+). Its function is as follows. Required to facilitate the formation of correct disulfide bonds in some periplasmic proteins and for the assembly of the periplasmic c-type cytochromes. Acts by transferring electrons from cytoplasmic thioredoxin to the periplasm. This transfer involves a cascade of disulfide bond formation and reduction steps. The polypeptide is Thiol:disulfide interchange protein DsbD (Salmonella choleraesuis (strain SC-B67)).